A 616-amino-acid polypeptide reads, in one-letter code: Sulfite reductase [NADPH] flavoprotein alpha-component (616 aa).

Positions 80 to 218 (LTIIFASQTG…SAAQWRKQAL (139 aa)) constitute a Flavodoxin-like domain. Residues 86–91 (SQTGNA), 133–136 (STNG), and 169–178 (LGDSSYEFFC) each bind FMN. One can recognise an FAD-binding FR-type domain in the interval 251–465 (QKPYAATLLT…VENNNNFKLP (215 aa)). Residues T339, G373, 403-406 (RLYS), 421-423 (TVG), Y427, and 436-439 (GGAS) each bind FAD. Residues 536-537 (SR), 542-546 (KVYVQ), and D578 each bind NADP(+). Residue Y616 coordinates FAD.

It belongs to the NADPH-dependent sulphite reductase flavoprotein subunit CysJ family. The protein in the N-terminal section; belongs to the flavodoxin family. In the C-terminal section; belongs to the flavoprotein pyridine nucleotide cytochrome reductase family. As to quaternary structure, alpha(8)-beta(8). The alpha component is a flavoprotein, the beta component is a hemoprotein. It depends on FAD as a cofactor. Requires FMN as cofactor.

It catalyses the reaction hydrogen sulfide + 3 NADP(+) + 3 H2O = sulfite + 3 NADPH + 4 H(+). The protein operates within sulfur metabolism; hydrogen sulfide biosynthesis; hydrogen sulfide from sulfite (NADPH route): step 1/1. Functionally, component of the sulfite reductase complex that catalyzes the 6-electron reduction of sulfite to sulfide. This is one of several activities required for the biosynthesis of L-cysteine from sulfate. The flavoprotein component catalyzes the electron flow from NADPH -&gt; FAD -&gt; FMN to the hemoprotein component. This is Sulfite reductase [NADPH] flavoprotein alpha-component from Vibrio vulnificus (strain CMCP6).